A 296-amino-acid chain; its full sequence is Transcription repressor OFP3 (296 aa).

Disordered regions lie at residues 27–115 and 131–196; these read MSRS…SANA and PSDQ…AHSS. The segment covering 60–69 has biased composition (polar residues); it reads LSSTAHHPQA. Positions 78-88 are enriched in basic residues; the sequence is SFKRKIKRKTV. Residues 92-115 are compositionally biased toward low complexity; that stretch reads SSRLKLSTSSSLNHRSKSSSSANA. Positions 136-159 are enriched in basic and acidic residues; it reads FVHDPEPHSSIDIKDELSVRKLDD. One can recognise an OVATE domain in the interval 228 to 287; the sequence is IVLSSVDPEKDFRESMVEMIMENKMREQKDLEDLLACYLSLNSSEYHDVIIKAFENTWLH.

Interacts with BLH1, BLH3, KNAT5 and KNAT7.

Its subcellular location is the nucleus. Functionally, transcriptional repressor that may regulate multiple aspects of plant growth and development through the regulation of BEL1-LIKE (BLH) and KNOX TALE (KNAT) homeodomain transcription factors. The sequence is that of Transcription repressor OFP3 (OFP3) from Arabidopsis thaliana (Mouse-ear cress).